The primary structure comprises 324 residues: S-methyl-5'-thioadenosine phosphorylase (324 aa).

Phosphate contacts are provided by residues Ser14, 57–58 (RH), and 90–91 (SA). Residue Met196 coordinates substrate. Ser197 contacts phosphate. 220-222 (DYD) is a binding site for substrate.

It belongs to the PNP/MTAP phosphorylase family. MTAP subfamily. In terms of assembly, homotrimer.

The protein resides in the cytoplasm. It localises to the nucleus. It catalyses the reaction S-methyl-5'-thioadenosine + phosphate = 5-(methylsulfanyl)-alpha-D-ribose 1-phosphate + adenine. It participates in amino-acid biosynthesis; L-methionine biosynthesis via salvage pathway; S-methyl-5-thio-alpha-D-ribose 1-phosphate from S-methyl-5'-thioadenosine (phosphorylase route): step 1/1. In terms of biological role, catalyzes the reversible phosphorylation of S-methyl-5'-thioadenosine (MTA) to adenine and 5-methylthioribose-1-phosphate. Involved in the breakdown of MTA, a major by-product of polyamine biosynthesis. Responsible for the first step in the methionine salvage pathway after MTA has been generated from S-adenosylmethionine. Has broad substrate specificity with 6-aminopurine nucleosides as preferred substrates. The polypeptide is S-methyl-5'-thioadenosine phosphorylase (Coprinopsis cinerea (strain Okayama-7 / 130 / ATCC MYA-4618 / FGSC 9003) (Inky cap fungus)).